The sequence spans 412 residues: Lipoyl synthase, mitochondrial (412 aa).

Positions 127, 132, 138, 159, 163, 166, and 375 each coordinate [4Fe-4S] cluster. A Radical SAM core domain is found at 142 to 364 (SDDEGTATAT…EKEAMDMGFL (223 aa)).

The protein belongs to the radical SAM superfamily. Lipoyl synthase family. The cofactor is [4Fe-4S] cluster.

The protein localises to the mitochondrion. It catalyses the reaction [[Fe-S] cluster scaffold protein carrying a second [4Fe-4S](2+) cluster] + N(6)-octanoyl-L-lysyl-[protein] + 2 oxidized [2Fe-2S]-[ferredoxin] + 2 S-adenosyl-L-methionine + 4 H(+) = [[Fe-S] cluster scaffold protein] + N(6)-[(R)-dihydrolipoyl]-L-lysyl-[protein] + 4 Fe(3+) + 2 hydrogen sulfide + 2 5'-deoxyadenosine + 2 L-methionine + 2 reduced [2Fe-2S]-[ferredoxin]. Its pathway is protein modification; protein lipoylation via endogenous pathway; protein N(6)-(lipoyl)lysine from octanoyl-[acyl-carrier-protein]: step 2/2. In terms of biological role, catalyzes the radical-mediated insertion of two sulfur atoms into the C-6 and C-8 positions of the octanoyl moiety bound to the lipoyl domains of lipoate-dependent enzymes, thereby converting the octanoylated domains into lipoylated derivatives. The chain is Lipoyl synthase, mitochondrial from Leishmania infantum.